Here is a 189-residue protein sequence, read N- to C-terminus: Elongation factor P (189 aa).

It belongs to the elongation factor P family.

Its subcellular location is the cytoplasm. It functions in the pathway protein biosynthesis; polypeptide chain elongation. Involved in peptide bond synthesis. Stimulates efficient translation and peptide-bond synthesis on native or reconstituted 70S ribosomes in vitro. Probably functions indirectly by altering the affinity of the ribosome for aminoacyl-tRNA, thus increasing their reactivity as acceptors for peptidyl transferase. The polypeptide is Elongation factor P (Rhizobium etli (strain ATCC 51251 / DSM 11541 / JCM 21823 / NBRC 15573 / CFN 42)).